A 346-amino-acid chain; its full sequence is MTEYKKPIITEMRPKITVIGVGGGGGNAINNMIAENLQGVDFIAANTDAQALATSKAERRIQLGAAITEGLGAGSVPDIGNAAAQESIDEIMDHLGGTHMCFVTAGMGGGTGTGAAPVIAEAARRAGILTVAVVTKPFSFEGQRRMQTAELGVERLRESADTVIVIPNQNLFRIADAKTTFADAFMIADRVLYSGVSCITDLIVKEGLMNLDFADVKTVMKGMGRAMMGTGEATGENRAMLAAEAAIANPLLDEVSMRGAKGVLVSISGGMDMTLFEVDEAATRIREEVYDEADIVVGAIFDRSLDGTFRVSVVATGLDSNRSAQPTAPEAMNGQTAAAVPSRTLQ.

GTP-binding positions include 23-27 (GGGGN), 110-112 (GTG), Glu-141, Arg-145, and Asp-189. Positions 320–346 (SNRSAQPTAPEAMNGQTAAAVPSRTLQ) are disordered.

It belongs to the FtsZ family. Homodimer. Polymerizes to form a dynamic ring structure in a strictly GTP-dependent manner. Interacts directly with several other division proteins.

It localises to the cytoplasm. Essential cell division protein that forms a contractile ring structure (Z ring) at the future cell division site. The regulation of the ring assembly controls the timing and the location of cell division. One of the functions of the FtsZ ring is to recruit other cell division proteins to the septum to produce a new cell wall between the dividing cells. Binds GTP and shows GTPase activity. The sequence is that of Cell division protein FtsZ 2 from Rhizobium meliloti (strain 1021) (Ensifer meliloti).